A 222-amino-acid chain; its full sequence is Putative N-acetylmannosamine-6-phosphate 2-epimerase (222 aa).

It belongs to the NanE family.

It carries out the reaction an N-acyl-D-glucosamine 6-phosphate = an N-acyl-D-mannosamine 6-phosphate. The protein operates within amino-sugar metabolism; N-acetylneuraminate degradation; D-fructose 6-phosphate from N-acetylneuraminate: step 3/5. Functionally, converts N-acetylmannosamine-6-phosphate (ManNAc-6-P) to N-acetylglucosamine-6-phosphate (GlcNAc-6-P). The sequence is that of Putative N-acetylmannosamine-6-phosphate 2-epimerase from Staphylococcus aureus (strain USA300).